A 241-amino-acid chain; its full sequence is Small ribosomal subunit protein uS2 (241 aa).

It belongs to the universal ribosomal protein uS2 family.

In Buchnera aphidicola subsp. Cinara cedri (strain Cc), this protein is Small ribosomal subunit protein uS2.